The chain runs to 419 residues: Probable serine/threonine-protein kinase CST (419 aa).

The N-myristoyl glycine moiety is linked to residue Gly-2. Cys-4 carries S-palmitoyl cysteine lipidation. The disordered stretch occupies residues 8–48 (FSSSSPSKTGLHSHATTNNHSNGTEFSSTTGATTNSSVGQQ). The segment covering 15–48 (KTGLHSHATTNNHSNGTEFSSTTGATTNSSVGQQ) has biased composition (polar residues). The 283-residue stretch at 86–368 (FKPDSMLGQG…KEVVEVLEHI (283 aa)) folds into the Protein kinase domain. Residue 92–100 (LGQGGFGKV) coordinates ATP. Residue Ser-117 is modified to Phosphoserine. Lys-124 is an ATP binding site. Tyr-169 bears the Phosphotyrosine mark. Asp-218 functions as the Proton acceptor in the catalytic mechanism. At Ser-222 the chain carries Phosphoserine. Thr-253 and Thr-258 each carry phosphothreonine. A Phosphotyrosine modification is found at Tyr-266. A compositionally biased stretch (polar residues) spans 378–390 (SSTKQAVANSSRS). The disordered stretch occupies residues 378 to 419 (SSTKQAVANSSRSSPHHYRYKAGALGAERKRATPGRFGSVEK).

This sequence belongs to the protein kinase superfamily. Ser/Thr protein kinase family. In terms of assembly, interacts with SOBIR1/EVR and RLK5/HAE. Autophosphorylated on serine, threonine and tyrosine residues.

Its subcellular location is the cell membrane. It is found in the nucleus. The catalysed reaction is L-seryl-[protein] + ATP = O-phospho-L-seryl-[protein] + ADP + H(+). It carries out the reaction L-threonyl-[protein] + ATP = O-phospho-L-threonyl-[protein] + ADP + H(+). In terms of biological role, acts as a spatial inhibitor of signaling that modulates abscission zone cell adhesion and expansion. Acts both directly and indirectly by physically interacting with RLK5/HAE and SOBIR1/EVR at the cell surface. The chain is Probable serine/threonine-protein kinase CST from Arabidopsis thaliana (Mouse-ear cress).